The sequence spans 250 residues: Testis-expressed protein 101 (250 aa).

An N-terminal signal peptide occupies residues 1-25 (MGACRIQYVLLIFLLIASRWTLVQN). N45, N110, N134, and N160 each carry an N-linked (GlcNAc...) asparagine glycan. The UPAR/Ly6 domain maps to 141–215 (CPTCVALGSC…VKETCSYQSF (75 aa)). Residue G224 is the site of GPI-anchor amidated glycine attachment. Positions 225 to 250 (ASQMPTSLWVLELLFPLLLLPLTHFP) are cleaved as a propeptide — removed in mature form.

Interacts with VAMP3. Interacts with LY6K. Interacts with DPEP3; co-localized on the cell surface of spermatocytes, spermatids, and testicular spermatozoa, co-localized only in cytoplasmic droplets of caput and corpus epididymal sperm. Interacts with ADAM3; co-localized on sperm surface. Interacts with ADAM5. N-glycosylated; by high mannose and/or biantennary complex and/or certain types of hybrid oligosaccharides; possesses different oligosaccharides chains according to its subcellular localization in the testis. Post-translationally, sheds from membrane raft by ACE and released from the cell surface of epididymal sperm while it passes through the caput epididymis leading to disappearance of TEX101 on spermatozoa; is essential to produce fertile spermatozoa. In terms of tissue distribution, detected in testis and ovary. Expressed in spermatocytes, spermatids and testicular spermatozoa, but not in spermatogonia or interstitial cells. Expressed abundantly in testicular germ cells (TGCs) but mostly disappeared from epididymal spermatozoa.

It localises to the cell membrane. The protein resides in the membrane raft. Its subcellular location is the cytoplasmic vesicle. The protein localises to the secretory vesicle. It is found in the acrosome. It localises to the secreted. Functionally, plays a role in fertilization by controlling binding of sperm to zona pellucida and migration of spermatozoa into the oviduct probably through molecule adhesion ADAM3. May play a role in signal transduction and promote protein tyrosine phosphorylation. The protein is Testis-expressed protein 101 of Mus musculus (Mouse).